The sequence spans 337 residues: GTP 3',8-cyclase (337 aa).

Residues 17–243 enclose the Radical SAM core domain; sequence PFQRQYYYLR…HKSHTDGPAK (227 aa). Arginine 26 contributes to the GTP binding site. [4Fe-4S] cluster contacts are provided by cysteine 33 and cysteine 37. Tyrosine 39 provides a ligand contact to S-adenosyl-L-methionine. Residue cysteine 40 participates in [4Fe-4S] cluster binding. Residue arginine 76 coordinates GTP. Residue glycine 80 participates in S-adenosyl-L-methionine binding. Threonine 107 serves as a coordination point for GTP. Serine 131 contributes to the S-adenosyl-L-methionine binding site. Lysine 168 is a GTP binding site. Methionine 202 is an S-adenosyl-L-methionine binding site. [4Fe-4S] cluster contacts are provided by cysteine 265 and cysteine 268. 270 to 272 contributes to the GTP binding site; it reads RLR. Cysteine 282 serves as a coordination point for [4Fe-4S] cluster.

Belongs to the radical SAM superfamily. MoaA family. Monomer and homodimer. The cofactor is [4Fe-4S] cluster.

It carries out the reaction GTP + AH2 + S-adenosyl-L-methionine = (8S)-3',8-cyclo-7,8-dihydroguanosine 5'-triphosphate + 5'-deoxyadenosine + L-methionine + A + H(+). It functions in the pathway cofactor biosynthesis; molybdopterin biosynthesis. In terms of biological role, catalyzes the cyclization of GTP to (8S)-3',8-cyclo-7,8-dihydroguanosine 5'-triphosphate. This is GTP 3',8-cyclase from Haemophilus influenzae (strain 86-028NP).